We begin with the raw amino-acid sequence, 213 residues long: Kynurenine formamidase (213 aa).

W20 contacts substrate. Residues H50, H54, and D56 each contribute to the Zn(2+) site. H60 (proton donor/acceptor) is an active-site residue. Zn(2+)-binding residues include H161 and E173.

Belongs to the Cyclase 1 superfamily. KynB family. Homodimer. Requires Zn(2+) as cofactor.

The catalysed reaction is N-formyl-L-kynurenine + H2O = L-kynurenine + formate + H(+). The protein operates within amino-acid degradation; L-tryptophan degradation via kynurenine pathway; L-kynurenine from L-tryptophan: step 2/2. Catalyzes the hydrolysis of N-formyl-L-kynurenine to L-kynurenine, the second step in the kynurenine pathway of tryptophan degradation. This Pseudomonas aeruginosa (strain ATCC 15692 / DSM 22644 / CIP 104116 / JCM 14847 / LMG 12228 / 1C / PRS 101 / PAO1) protein is Kynurenine formamidase.